Here is a 693-residue protein sequence, read N- to C-terminus: Elongation factor G (693 aa).

Residues 8 to 282 enclose the tr-type G domain; it reads EKTRNIGIMA…AVIDYLPSPL (275 aa). Residues 17–24, 81–85, and 135–138 each bind GTP; these read AHVDAGKT, DTPGH, and NKMD.

The protein belongs to the TRAFAC class translation factor GTPase superfamily. Classic translation factor GTPase family. EF-G/EF-2 subfamily.

The protein localises to the cytoplasm. Catalyzes the GTP-dependent ribosomal translocation step during translation elongation. During this step, the ribosome changes from the pre-translocational (PRE) to the post-translocational (POST) state as the newly formed A-site-bound peptidyl-tRNA and P-site-bound deacylated tRNA move to the P and E sites, respectively. Catalyzes the coordinated movement of the two tRNA molecules, the mRNA and conformational changes in the ribosome. In Streptococcus pneumoniae (strain ATCC 700669 / Spain 23F-1), this protein is Elongation factor G.